A 318-amino-acid polypeptide reads, in one-letter code: Ubiquitin-like domain-containing CTD phosphatase 1 (318 aa).

One can recognise a Ubiquitin-like domain in the interval 3–81 (VSVIIKWGGQ…IMMMGTREES (79 aa)). In terms of domain architecture, FCP1 homology spans 133-294 (PRPGKRLLVL…YKLSQYLKEI (162 aa)). Residues Asp-143, Asp-145, and Asp-253 each contribute to the Mg(2+) site.

It depends on Mg(2+) as a cofactor.

Its subcellular location is the nucleus. The catalysed reaction is O-phospho-L-seryl-[protein] + H2O = L-seryl-[protein] + phosphate. It carries out the reaction O-phospho-L-threonyl-[protein] + H2O = L-threonyl-[protein] + phosphate. In terms of biological role, dephosphorylates 26S nuclear proteasomes, thereby decreasing their proteolytic activity. Recruited to the 19S regulatory particle of the 26S proteasome where it dephosphorylates 19S component psmc2 which impairs psmc2 ATPase activity and disrupts 26S proteasome assembly. Has also been reported to stimulate the proteolytic activity of the 26S proteasome. The protein is Ubiquitin-like domain-containing CTD phosphatase 1 (ublcp1) of Danio rerio (Zebrafish).